A 610-amino-acid chain; its full sequence is tRNA uridine 5-carboxymethylaminomethyl modification enzyme MnmG (610 aa).

14–19 (GAGHAG) provides a ligand contact to FAD. NAD(+) is bound at residue 274–288 (GPRYCPSIEDKIVKF).

It belongs to the MnmG family. In terms of assembly, homodimer. Heterotetramer of two MnmE and two MnmG subunits. FAD serves as cofactor.

It is found in the cytoplasm. NAD-binding protein involved in the addition of a carboxymethylaminomethyl (cmnm) group at the wobble position (U34) of certain tRNAs, forming tRNA-cmnm(5)s(2)U34. This Chlamydia trachomatis serovar A (strain ATCC VR-571B / DSM 19440 / HAR-13) protein is tRNA uridine 5-carboxymethylaminomethyl modification enzyme MnmG.